A 428-amino-acid polypeptide reads, in one-letter code: Tyrosine--tRNA ligase (428 aa).

L-tyrosine is bound at residue tyrosine 41. Positions 46 to 55 (PTADSLHLGH) match the 'HIGH' region motif. Lysine 148 is modified (N6-acetyllysine). L-tyrosine contacts are provided by tyrosine 179 and glutamine 183. The 'KMSKS' region signature appears at 239–243 (KFGKT). Lysine 242 contacts ATP. The S4 RNA-binding domain maps to 361-418 (ADLMQALVDSELQPSRGQARKTIASNAITINGEKQSDPEYFFKEEDRLFGRFTLLRRG).

This sequence belongs to the class-I aminoacyl-tRNA synthetase family. TyrS type 1 subfamily. As to quaternary structure, homodimer.

The protein resides in the cytoplasm. The enzyme catalyses tRNA(Tyr) + L-tyrosine + ATP = L-tyrosyl-tRNA(Tyr) + AMP + diphosphate + H(+). Functionally, catalyzes the attachment of tyrosine to tRNA(Tyr) in a two-step reaction: tyrosine is first activated by ATP to form Tyr-AMP and then transferred to the acceptor end of tRNA(Tyr). The chain is Tyrosine--tRNA ligase from Escherichia coli O1:K1 / APEC.